A 279-amino-acid polypeptide reads, in one-letter code: Phosphatidylglycerol--prolipoprotein diacylglyceryl transferase (279 aa).

The next 7 helical transmembrane spans lie at 22 to 42 (SAHWYGLMYLIGFYFIMWSSI), 58 to 78 (ILYFSFLNALIGGRIGYVIFY), 89 to 109 (FIFKVWEGGMSFHGGLLGSII), 128 to 148 (FLVPLIPFGLGFGRIGNFING), 195 to 215 (ISQLYEMFLEGILLFIILNIF), 223 to 243 (GYMSGLFLILYGSFRIIAEFF), and 256 to 276 (YISLGQILSIPMILYGLILII). Arg-141 is a binding site for a 1,2-diacyl-sn-glycero-3-phospho-(1'-sn-glycerol).

The protein belongs to the Lgt family.

It localises to the cell membrane. It catalyses the reaction L-cysteinyl-[prolipoprotein] + a 1,2-diacyl-sn-glycero-3-phospho-(1'-sn-glycerol) = an S-1,2-diacyl-sn-glyceryl-L-cysteinyl-[prolipoprotein] + sn-glycerol 1-phosphate + H(+). It participates in protein modification; lipoprotein biosynthesis (diacylglyceryl transfer). Catalyzes the transfer of the diacylglyceryl group from phosphatidylglycerol to the sulfhydryl group of the N-terminal cysteine of a prolipoprotein, the first step in the formation of mature lipoproteins. The protein is Phosphatidylglycerol--prolipoprotein diacylglyceryl transferase of Wigglesworthia glossinidia brevipalpis.